Here is a 143-residue protein sequence, read N- to C-terminus: Large ribosomal subunit protein uL11 (143 aa).

It belongs to the universal ribosomal protein uL11 family. As to quaternary structure, part of the ribosomal stalk of the 50S ribosomal subunit. Interacts with L10 and the large rRNA to form the base of the stalk. L10 forms an elongated spine to which L12 dimers bind in a sequential fashion forming a multimeric L10(L12)X complex. One or more lysine residues are methylated.

Forms part of the ribosomal stalk which helps the ribosome interact with GTP-bound translation factors. The polypeptide is Large ribosomal subunit protein uL11 (Rhizobium etli (strain ATCC 51251 / DSM 11541 / JCM 21823 / NBRC 15573 / CFN 42)).